Reading from the N-terminus, the 688-residue chain is UvrABC system protein B (688 aa).

The region spanning 31–414 (GRITAGETDV…LGIADGVVEQ (384 aa)) is the Helicase ATP-binding domain. 44–51 (GATGTGKS) serves as a coordination point for ATP. The Beta-hairpin signature appears at 97–120 (YYDYYQPEAYVPQTDTFIEKDSSI). A Helicase C-terminal domain is found at 434-600 (QIDDLLEEIR…PLRKRIADIT (167 aa)). The segment at 614-633 (LAGRDQKRKSPTPSLRSGGI) is disordered. One can recognise a UVR domain in the interval 642–677 (ESLIADLNAQMLAAAGELKFELAARLRDELSDLKRD).

It belongs to the UvrB family. Forms a heterotetramer with UvrA during the search for lesions. Interacts with UvrC in an incision complex.

The protein resides in the cytoplasm. Functionally, the UvrABC repair system catalyzes the recognition and processing of DNA lesions. A damage recognition complex composed of 2 UvrA and 2 UvrB subunits scans DNA for abnormalities. Upon binding of the UvrA(2)B(2) complex to a putative damaged site, the DNA wraps around one UvrB monomer. DNA wrap is dependent on ATP binding by UvrB and probably causes local melting of the DNA helix, facilitating insertion of UvrB beta-hairpin between the DNA strands. Then UvrB probes one DNA strand for the presence of a lesion. If a lesion is found the UvrA subunits dissociate and the UvrB-DNA preincision complex is formed. This complex is subsequently bound by UvrC and the second UvrB is released. If no lesion is found, the DNA wraps around the other UvrB subunit that will check the other stand for damage. The polypeptide is UvrABC system protein B (Leifsonia xyli subsp. xyli (strain CTCB07)).